A 294-amino-acid polypeptide reads, in one-letter code: Dof zinc finger protein DOF4.1 (294 aa).

The segment at 68–122 (RNCPRCNSSNTKFCYYNNYSLAQPRYLCKSCRRYWTEGGSLRNVPVGGGSRKNKK) adopts a Dof-type zinc-finger fold. Zn(2+) is bound by residues cysteine 70, cysteine 73, cysteine 95, and cysteine 98. Disordered regions lie at residues 109–178 (RNVP…DKRA) and 247–294 (MYPY…GPTW). Polar residues-rich tracts occupy residues 126 to 136 (PNSSTSSSTKN) and 157 to 173 (KTHQ…SSPM). The span at 251–273 (GDHEDRQQHHHVRHDDGNKKREG) shows a compositional bias: basic and acidic residues. Positions 284–294 (ILGGDSGGPTW) are enriched in gly residues.

It localises to the nucleus. Functionally, transcription factor that binds specifically to a 5'-AA[AG]G-3' consensus core sequence. This is Dof zinc finger protein DOF4.1 (DOF4.1) from Arabidopsis thaliana (Mouse-ear cress).